The primary structure comprises 174 residues: UPF0316 protein lmo1776 (174 aa).

3 helical membrane-spanning segments follow: residues glycine 4–valine 24, leucine 36–leucine 56, and isoleucine 62–isoleucine 82.

The protein belongs to the UPF0316 family.

The protein resides in the cell membrane. This chain is UPF0316 protein lmo1776, found in Listeria monocytogenes serovar 1/2a (strain ATCC BAA-679 / EGD-e).